A 1058-amino-acid chain; its full sequence is Carbamoyl phosphate synthase large chain (1058 aa).

Residues 1–401 are carboxyphosphate synthetic domain; that stretch reads MPKRTDIQKI…SLLKACRSLE (401 aa). 12 residues coordinate ATP: Arg129, Arg169, Gly175, Gly176, Arg208, Ile210, Glu215, Gly241, Ile242, His243, Gln284, and Glu298. The ATP-grasp 1 domain occupies 133–327; sequence KQLMEELEQP…IAKLAAKIAV (195 aa). 3 residues coordinate Mg(2+): Gln284, Glu298, and Asn300. The Mn(2+) site is built by Gln284, Glu298, and Asn300. An oligomerization domain region spans residues 402–546; the sequence is IGVHHNEIPE…YSTYGWENES (145 aa). The interval 547 to 929 is carbamoyl phosphate synthetic domain; it reads IRSDKESVLV…ALYKAFEASY (383 aa). In terms of domain architecture, ATP-grasp 2 spans 671-861; sequence EQALKELDIP…MAQVATKLIL (191 aa). Residues Arg707, Ser746, Ile748, Glu752, Gly777, Val778, His779, Ser780, Gln820, and Glu832 each contribute to the ATP site. Mg(2+)-binding residues include Gln820, Glu832, and Asn834. The Mn(2+) site is built by Gln820, Glu832, and Asn834. Residues 930–1058 form the MGS-like domain; the sequence is LHLPTFGNVV…ESRSFVTEAI (129 aa). The allosteric domain stretch occupies residues 930-1058; that stretch reads LHLPTFGNVV…ESRSFVTEAI (129 aa).

This sequence belongs to the CarB family. In terms of assembly, composed of two chains; the small (or glutamine) chain promotes the hydrolysis of glutamine to ammonia, which is used by the large (or ammonia) chain to synthesize carbamoyl phosphate. Tetramer of heterodimers (alpha,beta)4. Mg(2+) serves as cofactor. It depends on Mn(2+) as a cofactor.

It catalyses the reaction hydrogencarbonate + L-glutamine + 2 ATP + H2O = carbamoyl phosphate + L-glutamate + 2 ADP + phosphate + 2 H(+). It carries out the reaction hydrogencarbonate + NH4(+) + 2 ATP = carbamoyl phosphate + 2 ADP + phosphate + 2 H(+). The protein operates within amino-acid biosynthesis; L-arginine biosynthesis; carbamoyl phosphate from bicarbonate: step 1/1. It participates in pyrimidine metabolism; UMP biosynthesis via de novo pathway; (S)-dihydroorotate from bicarbonate: step 1/3. Large subunit of the glutamine-dependent carbamoyl phosphate synthetase (CPSase). CPSase catalyzes the formation of carbamoyl phosphate from the ammonia moiety of glutamine, carbonate, and phosphate donated by ATP, constituting the first step of 2 biosynthetic pathways, one leading to arginine and/or urea and the other to pyrimidine nucleotides. The large subunit (synthetase) binds the substrates ammonia (free or transferred from glutamine from the small subunit), hydrogencarbonate and ATP and carries out an ATP-coupled ligase reaction, activating hydrogencarbonate by forming carboxy phosphate which reacts with ammonia to form carbamoyl phosphate. The protein is Carbamoyl phosphate synthase large chain of Streptococcus pneumoniae (strain P1031).